Here is a 391-residue protein sequence, read N- to C-terminus: E3 ubiquitin-protein ligase RMND5A (391 aa).

Methionine 1 is subject to N-acetylmethionine. The 33-residue stretch at 114 to 146 (SQRLLNEVMVEHFFRQGMLDVAEELCQESGLSV) folds into the LisH domain. The 58-residue stretch at 153–210 (PFVELNRILEALKVRVLRPALEWAVSNREMLIAQNSSLEFKLHRLYFISLLMGGTTNQ) folds into the CTLH domain. The segment at 336 to 377 (CPILRQQTTDNNPPMKLVCGHIISRDALNKMFNGSKLKCPYC) adopts an RING-Gid-type zinc-finger fold.

Identified in the CTLH complex that contains GID4, RANBP9 and/or RANBP10, MKLN1, MAEA, RMND5A (or alternatively its paralog RMND5B), GID8, ARMC8, WDR26 and YPEL5. Within this complex, MAEA, RMND5A (or alternatively its paralog RMND5B), GID8, WDR26, and RANBP9 and/or RANBP10 form the catalytic core, while GID4, MKLN1, ARMC8 and YPEL5 have ancillary roles.

It localises to the nucleus. The protein localises to the nucleoplasm. It is found in the cytoplasm. The catalysed reaction is S-ubiquitinyl-[E2 ubiquitin-conjugating enzyme]-L-cysteine + [acceptor protein]-L-lysine = [E2 ubiquitin-conjugating enzyme]-L-cysteine + N(6)-ubiquitinyl-[acceptor protein]-L-lysine.. Functionally, core component of the CTLH E3 ubiquitin-protein ligase complex that selectively accepts ubiquitin from UBE2H and mediates ubiquitination and subsequent proteasomal degradation of the transcription factor HBP1. MAEA and RMND5A are both required for catalytic activity of the CTLH E3 ubiquitin-protein ligase complex. Catalytic activity of the complex is required for normal cell proliferation. The CTLH E3 ubiquitin-protein ligase complex is not required for the degradation of enzymes involved in gluconeogenesis, such as FBP1. This is E3 ubiquitin-protein ligase RMND5A (Rmnd5a) from Mus musculus (Mouse).